The following is a 210-amino-acid chain: CASP-like protein 3A2 (210 aa).

Topologically, residues 1–45 (MMMNGQKMAAAEVAVQLPESKMVTENIGGAAAAMRPFGRKAEVMN) are cytoplasmic. A helical membrane pass occupies residues 46–66 (VLLRVLCMVTSVAALSSMVTA). Topologically, residues 67–92 (QQSSTVSIYGFMLPIQSKWSFSHSFE) are extracellular. A helical membrane pass occupies residues 93-113 (YVVGVSAVVAAHSLLQLLISV). The Cytoplasmic segment spans residues 114–128 (SRLLRKSPVIQSRSH). Residues 129 to 149 (AWLVFAGDQVFAYAMISAGAA) form a helical membrane-spanning segment. Over 150-178 (ASGVTNLNRTGIRHTALPNFCKPLQSFCD) the chain is Extracellular. N157 carries N-linked (GlcNAc...) asparagine glycosylation. The chain crosses the membrane as a helical span at residues 179-199 (HVAVSIFFTFLSCFLLAASAV). Residues 200 to 210 (QEVIWLSRSKY) are Cytoplasmic-facing.

It belongs to the Casparian strip membrane proteins (CASP) family. As to quaternary structure, homodimer and heterodimers.

It localises to the cell membrane. In Populus trichocarpa (Western balsam poplar), this protein is CASP-like protein 3A2.